Reading from the N-terminus, the 122-residue chain is Large ribosomal subunit protein uL14 (122 aa).

Belongs to the universal ribosomal protein uL14 family. As to quaternary structure, part of the 50S ribosomal subunit. Forms a cluster with proteins L3 and L19. In the 70S ribosome, L14 and L19 interact and together make contacts with the 16S rRNA in bridges B5 and B8.

In terms of biological role, binds to 23S rRNA. Forms part of two intersubunit bridges in the 70S ribosome. The polypeptide is Large ribosomal subunit protein uL14 (Sorangium cellulosum (strain So ce56) (Polyangium cellulosum (strain So ce56))).